A 287-amino-acid chain; its full sequence is Genetic interactor of prohibitin 7, mitochondrial (287 aa).

Residues 1-24 constitute a mitochondrion transit peptide; that stretch reads MVLSNVKIFRLKSHRAFRIGPMIK. The helical transmembrane segment at 250-266 threads the bilayer; that stretch reads SKAIISFVVFVSIYVWL.

It belongs to the GEP7 family.

Its subcellular location is the mitochondrion membrane. Its function is as follows. Involved in respiratory growth and required for cell survival in the absence of prohibitins or GEM1. The chain is Genetic interactor of prohibitin 7, mitochondrial (GEP7) from Saccharomyces cerevisiae (strain ATCC 204508 / S288c) (Baker's yeast).